The primary structure comprises 320 residues: Cilia- and flagella-associated protein 77 (320 aa).

The interval 1 to 27 (MPEARSSGPDLTRWRKQQQPVRRTVSQ) is disordered. The segment covering 17–27 (QQQPVRRTVSQ) has biased composition (polar residues).

This sequence belongs to the CFAP77 family. In terms of assembly, microtubule inner protein component of sperm flagellar doublet microtubules. Expressed in airway epithelial cells.

It is found in the cytoplasm. It localises to the cytoskeleton. The protein localises to the cilium axoneme. The protein resides in the flagellum axoneme. Its function is as follows. Microtubule inner protein (MIP) part of the dynein-decorated doublet microtubules (DMTs) in cilia axoneme, which is required for motile cilia beating. This Homo sapiens (Human) protein is Cilia- and flagella-associated protein 77.